The primary structure comprises 209 residues: UPF0319 protein VF_1616 (209 aa).

The signal sequence occupies residues 1 to 21; that stretch reads MKIQSIFAASFCLLSSISAHA.

The protein belongs to the UPF0319 family.

This chain is UPF0319 protein VF_1616, found in Aliivibrio fischeri (strain ATCC 700601 / ES114) (Vibrio fischeri).